We begin with the raw amino-acid sequence, 151 residues long: Large ribosomal subunit protein uL13 (151 aa).

A disordered region spans residues S129–N151.

This sequence belongs to the universal ribosomal protein uL13 family. As to quaternary structure, part of the 50S ribosomal subunit.

Its function is as follows. This protein is one of the early assembly proteins of the 50S ribosomal subunit, although it is not seen to bind rRNA by itself. It is important during the early stages of 50S assembly. This Gloeothece citriformis (strain PCC 7424) (Cyanothece sp. (strain PCC 7424)) protein is Large ribosomal subunit protein uL13.